Reading from the N-terminus, the 174-residue chain is Ribosome maturation factor RimM (174 aa).

Residues 97–169 form the PRC barrel domain; the sequence is GNKFYFHEVI…KVVMDLPEGL (73 aa).

The protein belongs to the RimM family. In terms of assembly, binds ribosomal protein uS19.

It is found in the cytoplasm. Its function is as follows. An accessory protein needed during the final step in the assembly of 30S ribosomal subunit, possibly for assembly of the head region. Essential for efficient processing of 16S rRNA. May be needed both before and after RbfA during the maturation of 16S rRNA. It has affinity for free ribosomal 30S subunits but not for 70S ribosomes. The protein is Ribosome maturation factor RimM of Flavobacterium psychrophilum (strain ATCC 49511 / DSM 21280 / CIP 103535 / JIP02/86).